Consider the following 62-residue polypeptide: Large ribosomal subunit protein bL35 (62 aa).

The disordered stretch occupies residues 25–62 (EQAYRSHLSQNKTTKQKRQARKSVQMHSSDVKRFKALI). Residues 53 to 62 (SDVKRFKALI) show a composition bias toward basic and acidic residues.

Belongs to the bacterial ribosomal protein bL35 family.

This chain is Large ribosomal subunit protein bL35, found in Mycoplasmopsis fermentans (Mycoplasma fermentans).